Consider the following 210-residue polypeptide: Redox-sensing transcriptional repressor Rex (210 aa).

The H-T-H motif DNA-binding region spans 16-55 (IYSRFLKRLDKKGITTVSSGDIAEGVGVSPAQVRKDLAYF). Residue 90 to 95 (GAGNLG) coordinates NAD(+).

It belongs to the transcriptional regulatory Rex family. In terms of assembly, homodimer.

The protein localises to the cytoplasm. Modulates transcription in response to changes in cellular NADH/NAD(+) redox state. The polypeptide is Redox-sensing transcriptional repressor Rex (Desulforamulus reducens (strain ATCC BAA-1160 / DSM 100696 / MI-1) (Desulfotomaculum reducens)).